The sequence spans 262 residues: Lysine 5,6-aminomutase beta subunit (262 aa).

The B12-binding domain occupies 120-262; it reads KIVVVGASTG…VKTLNDRMNS (143 aa). Residues 130–136 and His133 each bind adenosylcob(III)alamin; that span reads TDAHTVG. N6-(pyridoxal phosphate)lysine is present on Lys144. Residues 185 to 192, 219 to 223, and 239 to 244 contribute to the adenosylcob(III)alamin site; these read LVSQTVTQ, LCGGP, and FGPGRF.

Belongs to the KamE family. Heterotetramer of 2 alpha and 2 beta subunits. Adenosylcob(III)alamin serves as cofactor. It depends on pyridoxal 5'-phosphate as a cofactor.

The catalysed reaction is (3S)-3,6-diaminohexanoate = (3S,5S)-3,5-diaminohexanoate. The enzyme catalyses D-lysine = (2R,5S)-2,5-diaminohexanoate. It participates in amino-acid metabolism; lysine degradation. With respect to regulation, rapidly inactivated in the presence of D-lysine and to a lesser extent in the absence of adenosylcobalamin (Adocbl). Activity is stable in the presence of Adocbl when D-lysine is absent. Adocbl imparts thermal stability at 37 degrees Celsius. Functionally, catalyzes the migration of the L-beta-lysine and D-lysine epsilon amino group to the delta carbon to produce 3,5-diaminohexanoate and 2,5-diaminohexanoate, respectively. The sequence is that of Lysine 5,6-aminomutase beta subunit (kamE) from Acetoanaerobium sticklandii (strain ATCC 12662 / DSM 519 / JCM 1433 / CCUG 9281 / NCIMB 10654 / HF) (Clostridium sticklandii).